Consider the following 401-residue polypeptide: Ufm1-specific protease 2 (401 aa).

Catalysis depends on residues Cys234, Asp358, and His360.

It belongs to the peptidase C78 family.

It is found in the endoplasmic reticulum. The protein localises to the cytoplasm. It localises to the nucleus. Functionally, thiol-dependent isopeptidase that specifically cleaves UFM1, a ubiquitin-like modifier protein, from conjugated proteins. While it is also able to mediate the processing of UFM1 precursors, a prerequisite for conjugation reactions, ufsp2 mainly acts as a protein deUFMylase that mediates deconjugation of UFM1 from target proteins. The protein is Ufm1-specific protease 2 of Danio rerio (Zebrafish).